A 121-amino-acid polypeptide reads, in one-letter code: Protein GAT4 (121 aa).

The tract at residues 29-48 (EAQHGLPRNADSQPARPRTG) is disordered. The GATA-type zinc-finger motif lies at 53-79 (CGQCGEIKTSLQWREGPNGAACLCNAC).

This chain is Protein GAT4 (GAT4), found in Saccharomyces cerevisiae (strain ATCC 204508 / S288c) (Baker's yeast).